The following is a 197-amino-acid chain: Proteasome subunit beta 1 (197 aa).

Residues 1 to 6 constitute a propeptide, removed in mature form; by autocatalysis; sequence MNRKTG. Thr7 serves as the catalytic Nucleophile.

It belongs to the peptidase T1B family. The 20S proteasome core is composed of 14 alpha and 14 beta subunits that assemble into four stacked heptameric rings, resulting in a barrel-shaped structure. The two inner rings, each composed of seven catalytic beta subunits, are sandwiched by two outer rings, each composed of seven alpha subunits. The catalytic chamber with the active sites is on the inside of the barrel. Has a gated structure, the ends of the cylinder being occluded by the N-termini of the alpha-subunits. Is capped at one or both ends by the proteasome regulatory ATPase, PAN.

It localises to the cytoplasm. It catalyses the reaction Cleavage of peptide bonds with very broad specificity.. The formation of the proteasomal ATPase PAN-20S proteasome complex, via the docking of the C-termini of PAN into the intersubunit pockets in the alpha-rings, triggers opening of the gate for substrate entry. Interconversion between the open-gate and close-gate conformations leads to a dynamic regulation of the 20S proteasome proteolysis activity. Functionally, component of the proteasome core, a large protease complex with broad specificity involved in protein degradation. In Pyrococcus abyssi (strain GE5 / Orsay), this protein is Proteasome subunit beta 1.